A 137-amino-acid chain; its full sequence is LLKPNMVTPGHSCPTKYSPEEIAMATVTALRRTVPPAVPGVTFLSGGQSEEEASINLNAINTCPLVRPWALTFSYGRALQASALSAWRGQRDNANAATEEFVKRAEVNGLAALGKYEGSGDDSGAAGQSLYVANHAY.

The Schiff-base intermediate with dihydroxyacetone-P role is filled by Lys-3.

This sequence belongs to the class I fructose-bisphosphate aldolase family. Homotetramer.

The catalysed reaction is beta-D-fructose 1,6-bisphosphate = D-glyceraldehyde 3-phosphate + dihydroxyacetone phosphate. The protein operates within carbohydrate degradation; glycolysis; D-glyceraldehyde 3-phosphate and glycerone phosphate from D-glucose: step 4/4. This chain is Fructose-bisphosphate aldolase C (ALDOC), found in Gallus gallus (Chicken).